We begin with the raw amino-acid sequence, 361 residues long: Phosphoserine aminotransferase (361 aa).

R42 contacts L-glutamate. Pyridoxal 5'-phosphate contacts are provided by residues 76-77, W102, T153, D173, and Q196; that span reads AR. K197 bears the N6-(pyridoxal phosphate)lysine mark. 238–239 is a pyridoxal 5'-phosphate binding site; it reads NT.

This sequence belongs to the class-V pyridoxal-phosphate-dependent aminotransferase family. SerC subfamily. Homodimer. The cofactor is pyridoxal 5'-phosphate.

It localises to the cytoplasm. The enzyme catalyses O-phospho-L-serine + 2-oxoglutarate = 3-phosphooxypyruvate + L-glutamate. The catalysed reaction is 4-(phosphooxy)-L-threonine + 2-oxoglutarate = (R)-3-hydroxy-2-oxo-4-phosphooxybutanoate + L-glutamate. It functions in the pathway amino-acid biosynthesis; L-serine biosynthesis; L-serine from 3-phospho-D-glycerate: step 2/3. It participates in cofactor biosynthesis; pyridoxine 5'-phosphate biosynthesis; pyridoxine 5'-phosphate from D-erythrose 4-phosphate: step 3/5. Its function is as follows. Catalyzes the reversible conversion of 3-phosphohydroxypyruvate to phosphoserine and of 3-hydroxy-2-oxo-4-phosphonooxybutanoate to phosphohydroxythreonine. This is Phosphoserine aminotransferase from Yersinia pestis bv. Antiqua (strain Angola).